A 262-amino-acid chain; its full sequence is 5'-nucleotidase SurE (262 aa).

A divalent metal cation contacts are provided by D11, D12, S43, and N101.

The protein belongs to the SurE nucleotidase family. It depends on a divalent metal cation as a cofactor.

Its subcellular location is the cytoplasm. It catalyses the reaction a ribonucleoside 5'-phosphate + H2O = a ribonucleoside + phosphate. In terms of biological role, nucleotidase that shows phosphatase activity on nucleoside 5'-monophosphates. The chain is 5'-nucleotidase SurE from Prochlorococcus marinus (strain NATL1A).